A 358-amino-acid chain; its full sequence is MAVKWTGGHSSPVLCLNASKEGLLASGAEGGDLTAWGEDGTPLGHTRFQGADDVTSVLFSPSCPTKLYASHGETISVLDVRSLKDSLDHFHVNEEEINCLSLNQTENLLASADDSGAIKILDLENKKVIRSLKRHSNICSSVAFRPQRPQSLVSCGLDMQVMLWSLQKARPLWITNLQEDETEEMEGPQSPGQLLNPALAHSISVASCGNIFSCGAEDGKVRIFRVMGVKCEQELGFKGHTSGVSQVCFLPESYLLLTGGNDGKITLWDANSEVEKKQKSPTKRTHRKKPKRGTCTKQGGNTNASVTDEEEHGNILPKLNIEHGEKVNWLLGTKIKGHQNILVADQTSCISVYPLNEF.

WD repeat units lie at residues 1-38 (MAVK…AWGE), 43-80 (LGHT…VLDV), 85-123 (DSLD…ILDL), 127-166 (KVIR…LWSL), 173-225 (WITN…RIFR), and 232-270 (EQEL…LWDA). The segment at 273–311 (EVEKKQKSPTKRTHRKKPKRGTCTKQGGNTNASVTDEEE) is disordered. Residues 279 to 294 (KSPTKRTHRKKPKRGT) show a composition bias toward basic residues. A compositionally biased stretch (polar residues) spans 295–306 (CTKQGGNTNASV). A WD 7 repeat occupies 314–355 (NILPKLNIEHGEKVNWLLGTKIKGHQNILVADQTSCISVYPL).

It belongs to the WD repeat WDR53 family.

The protein is WD repeat-containing protein 53 (WDR53) of Homo sapiens (Human).